Here is a 297-residue protein sequence, read N- to C-terminus: Quinate/shikimate dehydrogenase (297 aa).

Lys-80 and Asp-116 together coordinate substrate. Residues 141-144, 164-167, Lys-214, 241-244, and Gly-264 each bind NAD(+); these read AGGA, NRRD, and CVYN.

The protein belongs to the shikimate dehydrogenase family. As to quaternary structure, homodimer.

It catalyses the reaction L-quinate + NAD(+) = 3-dehydroquinate + NADH + H(+). It carries out the reaction L-quinate + NADP(+) = 3-dehydroquinate + NADPH + H(+). The enzyme catalyses shikimate + NADP(+) = 3-dehydroshikimate + NADPH + H(+). The catalysed reaction is shikimate + NAD(+) = 3-dehydroshikimate + NADH + H(+). It functions in the pathway metabolic intermediate biosynthesis; chorismate biosynthesis; chorismate from D-erythrose 4-phosphate and phosphoenolpyruvate: step 4/7. In terms of biological role, the actual biological function of YdiB remains unclear, nor is it known whether 3-dehydroshikimate or quinate represents the natural substrate. Catalyzes the reversible NAD-dependent reduction of both 3-dehydroshikimate (DHSA) and 3-dehydroquinate to yield shikimate (SA) and quinate, respectively. It can use both NAD or NADP for catalysis, however it has higher catalytic efficiency with NAD. This is Quinate/shikimate dehydrogenase from Shigella dysenteriae serotype 1 (strain Sd197).